A 222-amino-acid chain; its full sequence is Methylthioribulose-1-phosphate dehydratase (222 aa).

The Zn(2+) site is built by His-94 and His-96.

The protein belongs to the aldolase class II family. MtnB subfamily. Zn(2+) is required as a cofactor.

The enzyme catalyses 5-(methylsulfanyl)-D-ribulose 1-phosphate = 5-methylsulfanyl-2,3-dioxopentyl phosphate + H2O. The protein operates within amino-acid biosynthesis; L-methionine biosynthesis via salvage pathway; L-methionine from S-methyl-5-thio-alpha-D-ribose 1-phosphate: step 2/6. Functionally, catalyzes the dehydration of methylthioribulose-1-phosphate (MTRu-1-P) into 2,3-diketo-5-methylthiopentyl-1-phosphate (DK-MTP-1-P). The sequence is that of Methylthioribulose-1-phosphate dehydratase from Yersinia pseudotuberculosis serotype IB (strain PB1/+).